Here is a 152-residue protein sequence, read N- to C-terminus: Catabolic 3-dehydroquinase (152 aa).

Tyrosine 24 (proton acceptor) is an active-site residue. Substrate-binding residues include asparagine 75, histidine 81, and aspartate 88. Histidine 101 acts as the Proton donor in catalysis. Substrate is bound by residues 102 to 103 (IS) and arginine 112.

It belongs to the type-II 3-dehydroquinase family. In terms of assembly, homododecamer. Adopts a ring-like structure, composed of an arrangement of two hexameric rings stacked on top of one another.

The catalysed reaction is 3-dehydroquinate = 3-dehydroshikimate + H2O. It participates in aromatic compound metabolism; 3,4-dihydroxybenzoate biosynthesis; 3,4-dihydroxybenzoate from 3-dehydroquinate: step 1/2. Is involved in the catabolism of quinate. Allows the utilization of quinate as carbon source via the beta-ketoadipate pathway. The chain is Catabolic 3-dehydroquinase from Phaeosphaeria nodorum (strain SN15 / ATCC MYA-4574 / FGSC 10173) (Glume blotch fungus).